A 78-amino-acid polypeptide reads, in one-letter code: UPF0270 protein YPO0179/y3960/YP_0178 (78 aa).

Belongs to the UPF0270 family.

The polypeptide is UPF0270 protein YPO0179/y3960/YP_0178 (Yersinia pestis).